The chain runs to 557 residues: Dihydroxy-acid dehydratase (557 aa).

Cys-50 contributes to the [2Fe-2S] cluster binding site. Asp-82 lines the Mg(2+) pocket. Cys-123 contributes to the [2Fe-2S] cluster binding site. The Mg(2+) site is built by Asp-124 and Lys-125. Residue Lys-125 is modified to N6-carboxylysine. Cys-195 contacts [2Fe-2S] cluster. Residue Glu-447 coordinates Mg(2+). The Proton acceptor role is filled by Ser-473.

The protein belongs to the IlvD/Edd family. In terms of assembly, homodimer. The cofactor is [2Fe-2S] cluster. It depends on Mg(2+) as a cofactor.

The enzyme catalyses (2R)-2,3-dihydroxy-3-methylbutanoate = 3-methyl-2-oxobutanoate + H2O. It catalyses the reaction (2R,3R)-2,3-dihydroxy-3-methylpentanoate = (S)-3-methyl-2-oxopentanoate + H2O. It functions in the pathway amino-acid biosynthesis; L-isoleucine biosynthesis; L-isoleucine from 2-oxobutanoate: step 3/4. It participates in amino-acid biosynthesis; L-valine biosynthesis; L-valine from pyruvate: step 3/4. In terms of biological role, functions in the biosynthesis of branched-chain amino acids. Catalyzes the dehydration of (2R,3R)-2,3-dihydroxy-3-methylpentanoate (2,3-dihydroxy-3-methylvalerate) into 2-oxo-3-methylpentanoate (2-oxo-3-methylvalerate) and of (2R)-2,3-dihydroxy-3-methylbutanoate (2,3-dihydroxyisovalerate) into 2-oxo-3-methylbutanoate (2-oxoisovalerate), the penultimate precursor to L-isoleucine and L-valine, respectively. The polypeptide is Dihydroxy-acid dehydratase (Metallosphaera sedula (strain ATCC 51363 / DSM 5348 / JCM 9185 / NBRC 15509 / TH2)).